The chain runs to 436 residues: Serine hydroxymethyltransferase (436 aa).

(6S)-5,6,7,8-tetrahydrofolate contacts are provided by residues leucine 133 and 137 to 139 (GHI). Lysine 242 bears the N6-(pyridoxal phosphate)lysine mark.

Belongs to the SHMT family. In terms of assembly, homodimer. The cofactor is pyridoxal 5'-phosphate.

It is found in the cytoplasm. It catalyses the reaction (6R)-5,10-methylene-5,6,7,8-tetrahydrofolate + glycine + H2O = (6S)-5,6,7,8-tetrahydrofolate + L-serine. It functions in the pathway one-carbon metabolism; tetrahydrofolate interconversion. Its pathway is amino-acid biosynthesis; glycine biosynthesis; glycine from L-serine: step 1/1. Functionally, catalyzes the reversible interconversion of serine and glycine with tetrahydrofolate (THF) serving as the one-carbon carrier. This reaction serves as the major source of one-carbon groups required for the biosynthesis of purines, thymidylate, methionine, and other important biomolecules. Also exhibits THF-independent aldolase activity toward beta-hydroxyamino acids, producing glycine and aldehydes, via a retro-aldol mechanism. The sequence is that of Serine hydroxymethyltransferase from Pelagibacter ubique (strain HTCC1062).